The chain runs to 621 residues: Very-long-chain aldehyde decarbonylase GL1-5 (621 aa).

Transmembrane regions (helical) follow at residues 99–119 (IILSGILLYLGALYVPGGQHL), 126–146 (GAGLIALLHAGPVEFLYYWFH), 186–206 (LLFSIPLIACALTGTASIIAF), 224–244 (FELVPSWLFTWFPPLKYLMYT), and 332–352 (MWPLSWLSMVLTWTYGSSFTV). The 135-residue stretch at 138–272 (VEFLYYWFHR…MPFYDYIYNT (135 aa)) folds into the Fatty acid hydroxylase domain.

The protein belongs to the sterol desaturase family. In terms of assembly, homodimer.

It is found in the endoplasmic reticulum membrane. It carries out the reaction a long-chain fatty aldehyde + 2 NADPH + O2 + H(+) = a long-chain alkane + formate + 2 NADP(+) + H2O. Functionally, aldehyde decarbonylase involved in the conversion of aldehydes to alkanes. Core component of a very-long-chain alkane synthesis complex. This is Very-long-chain aldehyde decarbonylase GL1-5 from Oryza sativa subsp. indica (Rice).